We begin with the raw amino-acid sequence, 635 residues long: 4-hydroxy-3-methylbut-2-enyl diphosphate reductase (635 aa).

The interval 1 to 279 (MSIILAKKSG…KEAIFKMSNK (279 aa)) is 4-hydroxy-3-methylbut-2-enyl diphosphate reductase. C12 serves as a coordination point for [4Fe-4S] cluster. The (2E)-4-hydroxy-3-methylbut-2-enyl diphosphate site is built by H42 and H77. Dimethylallyl diphosphate-binding residues include H42 and H77. Isopentenyl diphosphate-binding residues include H42 and H77. Residue C99 coordinates [4Fe-4S] cluster. A (2E)-4-hydroxy-3-methylbut-2-enyl diphosphate-binding site is contributed by H127. Dimethylallyl diphosphate is bound at residue H127. H127 serves as a coordination point for isopentenyl diphosphate. E129 acts as the Proton donor in catalysis. (2E)-4-hydroxy-3-methylbut-2-enyl diphosphate is bound at residue T163. C191 provides a ligand contact to [4Fe-4S] cluster. (2E)-4-hydroxy-3-methylbut-2-enyl diphosphate is bound by residues S219, S220, N221, and S263. Residues S219, S220, N221, and S263 each contribute to the dimethylallyl diphosphate site. Isopentenyl diphosphate-binding residues include S219, S220, N221, and S263. 4 S1 motif domains span residues 298–373 (GQEV…LNRE), 380–455 (KEAF…ASRR), 476–544 (DTIK…LSIK), and 561–630 (GNIV…LSIK).

It in the N-terminal section; belongs to the IspH family. [4Fe-4S] cluster serves as cofactor.

It carries out the reaction isopentenyl diphosphate + 2 oxidized [2Fe-2S]-[ferredoxin] + H2O = (2E)-4-hydroxy-3-methylbut-2-enyl diphosphate + 2 reduced [2Fe-2S]-[ferredoxin] + 2 H(+). It catalyses the reaction dimethylallyl diphosphate + 2 oxidized [2Fe-2S]-[ferredoxin] + H2O = (2E)-4-hydroxy-3-methylbut-2-enyl diphosphate + 2 reduced [2Fe-2S]-[ferredoxin] + 2 H(+). It functions in the pathway isoprenoid biosynthesis; dimethylallyl diphosphate biosynthesis; dimethylallyl diphosphate from (2E)-4-hydroxy-3-methylbutenyl diphosphate: step 1/1. The protein operates within isoprenoid biosynthesis; isopentenyl diphosphate biosynthesis via DXP pathway; isopentenyl diphosphate from 1-deoxy-D-xylulose 5-phosphate: step 6/6. Functionally, catalyzes the conversion of 1-hydroxy-2-methyl-2-(E)-butenyl 4-diphosphate (HMBPP) into a mixture of isopentenyl diphosphate (IPP) and dimethylallyl diphosphate (DMAPP). Acts in the terminal step of the DOXP/MEP pathway for isoprenoid precursor biosynthesis. This chain is 4-hydroxy-3-methylbut-2-enyl diphosphate reductase, found in Clostridium tetani (strain Massachusetts / E88).